The following is a 181-amino-acid chain: Protein OPG005 (181 aa).

The chain is Protein OPG005 (OPG005) from Vaccinia virus (strain Copenhagen) (VACV).